A 412-amino-acid chain; its full sequence is Polyferredoxin protein MvhB (412 aa).

4Fe-4S ferredoxin-type domains follow at residues Met1–Glu29, Asp30–Leu57, Gly67–Gly96, Lys97–Ile127, Glu138–Val166, Gly168–Lys197, Arg207–Ser236, Leu238–Glu266, Glu276–Arg305, Glu314–Met345, Lys357–Glu386, and Asp385–Lys412. The [4Fe-4S] cluster site is built by Cys9, Cys12, Cys15, and Cys19. Residues Cys76, Cys79, Cys82, Cys86, Cys107, Cys110, Cys113, Cys117, Cys146, Cys149, Cys152, Cys156, Cys177, Cys180, Cys183, Cys187, Cys216, Cys219, Cys222, Cys226, Cys246, Cys249, Cys252, and Cys256 each coordinate [4Fe-4S] cluster. [4Fe-4S] cluster is bound by residues Cys325, Cys328, Cys331, Cys335, Cys366, Cys369, Cys372, Cys376, Cys394, Cys397, Cys400, and Cys404.

[4Fe-4S] cluster is required as a cofactor.

In Methanothermobacter marburgensis (strain ATCC BAA-927 / DSM 2133 / JCM 14651 / NBRC 100331 / OCM 82 / Marburg) (Methanobacterium thermoautotrophicum), this protein is Polyferredoxin protein MvhB (mvhB).